Here is a 332-residue protein sequence, read N- to C-terminus: Alanine racemase (332 aa).

The Proton acceptor; specific for D-alanine role is filled by K33. An N6-(pyridoxal phosphate)lysine modification is found at K33. Position 115 (R115) interacts with substrate. The Proton acceptor; specific for L-alanine role is filled by Y245. Position 286 (M286) interacts with substrate.

Belongs to the alanine racemase family. The cofactor is pyridoxal 5'-phosphate.

The enzyme catalyses L-alanine = D-alanine. It functions in the pathway amino-acid biosynthesis; D-alanine biosynthesis; D-alanine from L-alanine: step 1/1. Catalyzes the interconversion of L-alanine and D-alanine. May also act on other amino acids. The chain is Alanine racemase (alr) from Nitratiruptor sp. (strain SB155-2).